Consider the following 200-residue polypeptide: Recombination protein RecR (200 aa).

The C4-type zinc finger occupies 59–74; that stretch reads CDICGNVCESSPCPVC. One can recognise a Toprim domain in the interval 82–177; sequence SVICVVEEPK…KVTRLASGLP (96 aa).

The protein belongs to the RecR family.

In terms of biological role, may play a role in DNA repair. It seems to be involved in an RecBC-independent recombinational process of DNA repair. It may act with RecF and RecO. This chain is Recombination protein RecR, found in Bifidobacterium longum subsp. infantis (strain ATCC 15697 / DSM 20088 / JCM 1222 / NCTC 11817 / S12).